A 498-amino-acid polypeptide reads, in one-letter code: ATP synthase subunit beta, chloroplastic (498 aa).

Residue 172 to 179 (GGAGVGKT) participates in ATP binding.

It belongs to the ATPase alpha/beta chains family. F-type ATPases have 2 components, CF(1) - the catalytic core - and CF(0) - the membrane proton channel. CF(1) has five subunits: alpha(3), beta(3), gamma(1), delta(1), epsilon(1). CF(0) has four main subunits: a(1), b(1), b'(1) and c(9-12).

Its subcellular location is the plastid. The protein resides in the chloroplast thylakoid membrane. It catalyses the reaction ATP + H2O + 4 H(+)(in) = ADP + phosphate + 5 H(+)(out). Functionally, produces ATP from ADP in the presence of a proton gradient across the membrane. The catalytic sites are hosted primarily by the beta subunits. This Phaseolus vulgaris (Kidney bean) protein is ATP synthase subunit beta, chloroplastic.